The chain runs to 44 residues: Unknown protein 9 (44 aa).

The chain is Unknown protein 9 from Pseudotsuga menziesii (Douglas-fir).